The sequence spans 153 residues: UPF0178 protein CC_1215 (153 aa).

This sequence belongs to the UPF0178 family.

In Caulobacter vibrioides (strain ATCC 19089 / CIP 103742 / CB 15) (Caulobacter crescentus), this protein is UPF0178 protein CC_1215.